Reading from the N-terminus, the 232-residue chain is MGKVAVNSPAHRPLVSTAVYLAPSVKFPLQKRGLGTIYTPPLARLIEQLQRLPSVGPKTAQRLALHLLKRPDAEVENLAQALLDAKKRVGQCQVCFHLSAEPVCDICRHPQRDNSVICVVSDPRDVIALEKTREFRGKYHVLGGVISPMDGIGPEQLTIQPLLHRVSQPEIKEVILAISPSVEGETTTLYLGKLLQPFTKVTRIAFGLPMGGDLEYADEVTLARALEGRREL.

The C4-type zinc finger occupies 92–107 (CQVCFHLSAEPVCDIC). In terms of domain architecture, Toprim spans 115–209 (SVICVVSDPR…KVTRIAFGLP (95 aa)).

Belongs to the RecR family.

Its function is as follows. May play a role in DNA repair. It seems to be involved in an RecBC-independent recombinational process of DNA repair. It may act with RecF and RecO. This is Recombination protein RecR from Synechocystis sp. (strain ATCC 27184 / PCC 6803 / Kazusa).